The primary structure comprises 285 residues: Dermonecrotic toxin LiSicTox-alphaIA2aii (285 aa).

Positions 1-5 are excised as a propeptide; the sequence is DVEER. His-17 is an active-site residue. 2 residues coordinate Mg(2+): Glu-37 and Asp-39. His-53 functions as the Nucleophile in the catalytic mechanism. 2 disulfides stabilise this stretch: Cys-57-Cys-63 and Cys-59-Cys-202. Mg(2+) is bound at residue Asp-97. An N-linked (GlcNAc...) asparagine glycan is attached at Asn-262.

The protein belongs to the arthropod phospholipase D family. Class II subfamily. Class IIa sub-subfamily. The cofactor is Mg(2+). Expressed by the venom gland.

The protein resides in the secreted. The catalysed reaction is an N-(acyl)-sphingosylphosphocholine = an N-(acyl)-sphingosyl-1,3-cyclic phosphate + choline. It carries out the reaction an N-(acyl)-sphingosylphosphoethanolamine = an N-(acyl)-sphingosyl-1,3-cyclic phosphate + ethanolamine. The enzyme catalyses a 1-acyl-sn-glycero-3-phosphocholine = a 1-acyl-sn-glycero-2,3-cyclic phosphate + choline. It catalyses the reaction a 1-acyl-sn-glycero-3-phosphoethanolamine = a 1-acyl-sn-glycero-2,3-cyclic phosphate + ethanolamine. In terms of biological role, dermonecrotic toxins cleave the phosphodiester linkage between the phosphate and headgroup of certain phospholipids (sphingolipid and lysolipid substrates), forming an alcohol (often choline) and a cyclic phosphate. This toxin acts on sphingomyelin (SM) with high activity. It may also act on ceramide phosphoethanolamine (CPE), lysophosphatidylcholine (LPC) and lysophosphatidylethanolamine (LPE), but not on lysophosphatidylserine (LPS), and lysophosphatidylglycerol (LPG). It acts by transphosphatidylation, releasing exclusively cyclic phosphate products as second products. Shows high hemolytic activity. Induces dermonecrosis, vascular permeability, edema, inflammatory response, and platelet aggregation. Also shows cytotoxicity against renal epithelial cells. In addition, also induces hemolysis in a complement-dependent manner and probably also in a complement-independent manner. The hemolysis provoked in a complement-independent manner may be composed of several steps. The toxin may bind to erythrocyte membranes, may hydrolyze membrane phospholipids (SM and LPC) thus generating metabolism products that may cause hemolysis, probably by provoking an increase of calcium inside cells. The calcium influx may be due to the opening of L-type calcium channels, since L-type calcium channel blockers inhibit calcium influx. In vivo, is lethal to mice when intraperitoneally injected. The chain is Dermonecrotic toxin LiSicTox-alphaIA2aii from Loxosceles intermedia (Brown spider).